A 215-amino-acid chain; its full sequence is Protein C' (215 aa).

Residues 12–34 (MPSFLKKILKLRGRRQEDESRSR) are disordered. The tract at residues 15-22 (FLKKILKL) is involved in self-degradation and in host STAT1 degradation. Residues 25 to 35 (RRQEDESRSRM) show a composition bias toward basic and acidic residues. Positions 36–66 (LSDSSTQSYQVNQLTSEGTEAGSTIPSTPSK) are enriched in polar residues.

This sequence belongs to the respirovirus protein C family. The different isoforms interact (via C-terminus) with unphosphorylated and phosphorylated human STAT1 (via N-terminus), favoring the formation of parallel STAT1 homodimers. The different isoforms do not interact with host STAT2. C protein interacts with L protein; this interaction has an inhibitory effect on viral transcription and replication. In terms of processing, protein Y1 is produced not only by alternative initiation, but also by proteolytic cleavage of C'. Only alternative initiation is detected in vitro, whereas in vivo cleavage seems to be predominant.

Its subcellular location is the host cytoplasm. Its function is as follows. The different products prevent the establishment of cellular antiviral state by blocking the interferon-alpha/beta (IFN-alpha/beta) and IFN-gamma signaling pathways. They inhibit IFN-alpha/beta induced tyrosine phosphorylation of STAT1 and STAT2. Blocking the IFN-alpha/beta pathway requires binding to STAT1 in the cytoplasm. They inhibit IFN-gamma induced serine phosphorylation of STAT1. Block the IFN-gamma pathway by binding to and stabilizing the parallel form of the STAT1 dimer, further inducing high-molecular-weight complex formation and inhibition of transcription by IFN-gamma. May also have a role in preventing the cell to enter apoptosis. Modulate regulation of viral transcription and replication. Overexpression inhibits the viral RNA polymerase. The absence of all C', C and Y1 proteins leads to viral delayed growth. Plays an important role in virion particles release. Modulates virion shape. The chain is Protein C' (P/V/C) from Sendai virus (strain Ohita) (SeV).